The sequence spans 120 residues: uncharacterized protein (120 aa).

It is found in the cytoplasm. The protein resides in the nucleus. This is an uncharacterized protein from Schizosaccharomyces pombe (strain 972 / ATCC 24843) (Fission yeast).